Consider the following 581-residue polypeptide: Serine/threonine-protein kinase PINK1, mitochondrial (581 aa).

A mitochondrion-targeting transit peptide spans 1–77; that stretch reads MAVRQALGRG…RFFRQSVAGL (77 aa). Residues 78 to 93 are Mitochondrial intermembrane-facing; the sequence is AARLQRQFVVRAWGCA. Residues 94-110 form a helical membrane-spanning segment; it reads GPCGRAVFLAFGLGLGL. The interval 111–117 is required for outer membrane localization; it reads IEEKQAE. The Cytoplasmic portion of the chain corresponds to 111-581; the sequence is IEEKQAESRR…LLLCSWRAAL (471 aa). Positions 156–511 constitute a Protein kinase domain; it reads YLIGQSIGKG…VAANVLHLSL (356 aa). ATP contacts are provided by residues 162–170 and K186; that span reads IGKGCSAAV. The interval 189-208 is disordered; sequence GLLPGRGPGTSAPGEGQERA. Residue S228 is modified to Phosphoserine; by autocatalysis. D362 functions as the Proton acceptor in the catalytic mechanism. S402 carries the post-translational modification Phosphoserine; by autocatalysis.

This sequence belongs to the protein kinase superfamily. Ser/Thr protein kinase family. In terms of assembly, upon mitochondrial depolarization, it forms a supercomplex with TOM and TIM23 complexes. PINK1-TOM-TIM23 supercomplex formation requires PINK1 interaction with TOMM20 and TOMM70 and is critical for PINK1 stabilization at the outer mitochondrial membrane, kinase activation and downstream mitophagy. Upon mitochondrial depolarization, interacts with TIMM23; the interaction is required for PINK1 accumulation at the outer mitochondrial membrane, kinase activation by autophosphorylation and PRKN recruitement to mitochondria. Interacts with PRKN. Interacts with FBXO7. Forms a complex with PRKN and PARK7. Interacts with NENF. It depends on Mg(2+) as a cofactor. In terms of processing, proteolytically cleaved. In healthy cells, the precursor is continuously imported into the inner mitochondrial membrane (IMM), where it is proteolytically cleaved by mitochondrial-processing peptidase (MPP) and then undergoes further proteolytic cleavage by PARL or AFG3L2 to give rise to the 52 kDa short form. The 52 kDa short form is then released into the cytosol where it rapidly undergoes proteasome-dependent degradation. In unhealthy cells, when cellular stress conditions lead to the loss of mitochondrial membrane potential, mitochondrial import is impaired leading to the precursor accumulating on the outer mitochondrial membrane (OMM). If accumulation at the OMM fails and it is imported into the depolarized mitochondria, it undergoes cleavage by the IMM protease OMA1, promoting its subsequent degradation by the proteasome. Autophosphorylated. Loss of mitochondrial membrane potential results in the precursor accumulating on the outer mitochondrial membrane (OMM) where it is activated by autophosphorylation. Autophosphorylation at Ser-228 and Ser-402 is sufficient and essential for selective recruitment of PRKN to depolarized mitochondria, via PINK1-dependent phosphorylation of ubiquitin and maybe PRKN. As to expression, highly expressed in heart, skeletal muscle and testis, and at lower levels in brain, placenta, liver, kidney, pancreas, prostate, ovary and small intestine. Present in the embryonic testis from an early stage of development.

Its subcellular location is the mitochondrion outer membrane. The protein resides in the mitochondrion inner membrane. It localises to the cytoplasm. It is found in the cytosol. It carries out the reaction L-seryl-[protein] + ATP = O-phospho-L-seryl-[protein] + ADP + H(+). The catalysed reaction is L-threonyl-[protein] + ATP = O-phospho-L-threonyl-[protein] + ADP + H(+). Functionally, serine/threonine-protein kinase which acts as a sensor of mitochondrial damage and protects against mitochondrial dysfunction during cellular stress. It phosphorylates mitochondrial proteins to coordinate mitochondrial quality control mechanisms that remove and replace dysfunctional mitochondrial components. Depending on the severity of mitochondrial damage, activity ranges from preventing apoptosis and stimulating mitochondrial biogenesis to eliminating severely damaged mitochondria via PINK1-PRKN-dependent mitophagy. When cellular stress results in irreversible mitochondrial damage, PINK1 accumulates at the outer mitochondrial membrane (OMM) where it phosphorylates pre-existing polyubiquitin chains at 'Ser-65', recruits PRKN from the cytosol to the OMM and activates PRKN by phosphorylation at 'Ser-65'; activated PRKN then ubiquinates VDAC1 and other OMM proteins to initiate mitophagy. The PINK1-PRKN pathway also promotes fission of damaged mitochondria through phosphorylation and PRKN-dependent degradation of mitochondrial proteins involved in fission such as MFN2. This prevents the refusion of unhealthy mitochondria with the mitochondrial network or initiates mitochondrial fragmentation facilitating their later engulfment by autophagosomes. Also promotes mitochondrial fission independently of PRKN and ATG7-mediated mitophagy, via the phosphorylation and activation of DNM1L. Regulates motility of damaged mitochondria by promoting the ubiquitination and subsequent degradation of MIRO1 and MIRO2; in motor neurons, this likely inhibits mitochondrial intracellular anterograde transport along the axons which probably increases the chance of the mitochondria undergoing mitophagy in the soma. Required for ubiquinone reduction by mitochondrial complex I by mediating phosphorylation of complex I subunit NDUFA10. Phosphorylates LETM1, positively regulating its mitochondrial calcium transport activity. The polypeptide is Serine/threonine-protein kinase PINK1, mitochondrial (PINK1) (Homo sapiens (Human)).